The primary structure comprises 187 residues: Dihydrofolate reductase (187 aa).

Residues 4 to 185 (PLNCIVAVSQ…IKYKFEVYEK (182 aa)) form the DHFR domain. Residues alanine 10 and 16–22 (GIGKNGD) each bind NADP(+). 31-36 (EFKYFQ) lines the substrate pocket. Position 33 is an N6-acetyllysine; alternate (lysine 33). The residue at position 33 (lysine 33) is an N6-succinyllysine; alternate. 55–57 (RKT) lines the NADP(+) pocket. Substrate contacts are provided by asparagine 65 and arginine 71. NADP(+)-binding positions include 77-79 (SRE) and 117-124 (GGSSVYQE).

Belongs to the dihydrofolate reductase family. In terms of assembly, homodimer.

Its subcellular location is the mitochondrion. The protein resides in the cytoplasm. It carries out the reaction (6S)-5,6,7,8-tetrahydrofolate + NADP(+) = 7,8-dihydrofolate + NADPH + H(+). It participates in cofactor biosynthesis; tetrahydrofolate biosynthesis; 5,6,7,8-tetrahydrofolate from 7,8-dihydrofolate: step 1/1. Its function is as follows. Key enzyme in folate metabolism. Contributes to the de novo mitochondrial thymidylate biosynthesis pathway. Catalyzes an essential reaction for de novo glycine and purine synthesis, and for DNA precursor synthesis. Binds its own mRNA. The chain is Dihydrofolate reductase (Dhfr) from Mus musculus (Mouse).